The following is a 286-amino-acid chain: ATP synthase gamma chain (286 aa).

The protein belongs to the ATPase gamma chain family. As to quaternary structure, F-type ATPases have 2 components, CF(1) - the catalytic core - and CF(0) - the membrane proton channel. CF(1) has five subunits: alpha(3), beta(3), gamma(1), delta(1), epsilon(1). CF(0) has three main subunits: a, b and c.

The protein localises to the cell inner membrane. Produces ATP from ADP in the presence of a proton gradient across the membrane. The gamma chain is believed to be important in regulating ATPase activity and the flow of protons through the CF(0) complex. The sequence is that of ATP synthase gamma chain from Pseudomonas fluorescens (strain ATCC BAA-477 / NRRL B-23932 / Pf-5).